A 693-amino-acid chain; its full sequence is Elongation factor G (693 aa).

The region spanning 8-282 (EHTRNIGIMA…AVIDFMPSPT (275 aa)) is the tr-type G domain. Residues 17-24 (AHIDAGKT), 81-85 (DTPGH), and 135-138 (NKMD) each bind GTP.

This sequence belongs to the TRAFAC class translation factor GTPase superfamily. Classic translation factor GTPase family. EF-G/EF-2 subfamily.

The protein resides in the cytoplasm. In terms of biological role, catalyzes the GTP-dependent ribosomal translocation step during translation elongation. During this step, the ribosome changes from the pre-translocational (PRE) to the post-translocational (POST) state as the newly formed A-site-bound peptidyl-tRNA and P-site-bound deacylated tRNA move to the P and E sites, respectively. Catalyzes the coordinated movement of the two tRNA molecules, the mRNA and conformational changes in the ribosome. The polypeptide is Elongation factor G (Ruminiclostridium cellulolyticum (strain ATCC 35319 / DSM 5812 / JCM 6584 / H10) (Clostridium cellulolyticum)).